The sequence spans 609 residues: MSDNPPRMEVCPYCKKPFKRLKSHLPYCKMIGPTIPTDQKVYQSKPATLPRAKKMKGPIKDLIKAKGKELETENEERNSKLVVDKPEQTVKTFPLPAVGLERAATTKADKDIKNPIQPSFKMLKNTKPMTTFQEETKAQFYASEKTSPKRELAKDLPKSGESRCNPSEAGASLLVGSIEPSLSNQDRKYSSTLPNDVQTTSGDLKLDKIDPQRQELLVKLLDVPTGDCHISPKNVSDGVKRVRTLLSNERDSKGRDHLSGVPTDVTVTETPEKNTESLILSLKMSSLGKIQVMEKQEKGLTLGVETCGSKGNAEKSMSATEKQERTVMSHGCENFNTRDSVTGKESQGERPHLSLFIPRETTYQFHSVSQSSSQSLASLATTFLQEKKAEAQNHHCVPDVKALMESPEGQLSLEPKSDSQFQASHTGCQSPLCSAQRHTPQSPFTNHAAAAGRKTLRSCMGLEWFPELYPGYLGLGVLPGKPQCWNAMTQKPQLISPQGERLSQVSLLERSSTHIRSLEPPAGLTTSNFSLMRLLGAVQKGWIRCNTTIRKSGFGGITMLFTGYFVLCCSWSFRRLKKLCRPLPWKSTVPPCIGVAKTTGDCRSKTCLD.

Residues 1 to 552 (MSDNPPRMEV…IRCNTTIRKS (552 aa)) lie on the Mitochondrial matrix side of the membrane. Disordered stretches follow at residues 142-168 (ASEKTSPKRELAKDLPKSGESRCNPSE), 183-202 (SNQDRKYSSTLPNDVQTTSG), and 410-441 (QLSLEPKSDSQFQASHTGCQSPLCSAQRHTPQ). A compositionally biased stretch (basic and acidic residues) spans 146–161 (TSPKRELAKDLPKSGE). Residues 418-441 (DSQFQASHTGCQSPLCSAQRHTPQ) are compositionally biased toward polar residues. A helical transmembrane segment spans residues 553–573 (GFGGITMLFTGYFVLCCSWSF). At 574–609 (RRLKKLCRPLPWKSTVPPCIGVAKTTGDCRSKTCLD) the chain is on the mitochondrial intermembrane side.

The protein localises to the mitochondrion inner membrane. Its subcellular location is the mitochondrion matrix. It is found in the mitochondrion nucleoid. Critical regulator of mitochondrial DNA (mtDNA) abundance. Binds dsDNA throughout the mitochondrial genome without sequence specificity and controls mtDNA copy number by promoting its replication. Also plays important roles in mitochondrial metabolism and cell proliferation. The sequence is that of Mitochondrial nucleoid-associated protein 1 from Homo sapiens (Human).